A 120-amino-acid chain; its full sequence is NAD(P)H-quinone oxidoreductase subunit 3 (120 aa).

A run of 3 helical transmembrane segments spans residues 2–22 (FVLSGYEYFLGFLIVSSLVPI), 64–84 (MFALVFVVFDVETVFLYPWAV), and 89–109 (LGLLAFVEALIFIAILVIALV).

The protein belongs to the complex I subunit 3 family. NDH-1 can be composed of about 15 different subunits; different subcomplexes with different compositions have been identified which probably have different functions.

Its subcellular location is the cellular thylakoid membrane. It catalyses the reaction a plastoquinone + NADH + (n+1) H(+)(in) = a plastoquinol + NAD(+) + n H(+)(out). The enzyme catalyses a plastoquinone + NADPH + (n+1) H(+)(in) = a plastoquinol + NADP(+) + n H(+)(out). In terms of biological role, NDH-1 shuttles electrons from an unknown electron donor, via FMN and iron-sulfur (Fe-S) centers, to quinones in the respiratory and/or the photosynthetic chain. The immediate electron acceptor for the enzyme in this species is believed to be plastoquinone. Couples the redox reaction to proton translocation, and thus conserves the redox energy in a proton gradient. Cyanobacterial NDH-1 also plays a role in inorganic carbon-concentration. The polypeptide is NAD(P)H-quinone oxidoreductase subunit 3 (Picosynechococcus sp. (strain ATCC 27264 / PCC 7002 / PR-6) (Agmenellum quadruplicatum)).